Here is a 223-residue protein sequence, read N- to C-terminus: Arginine kinase (223 aa).

The region spanning 56-222 is the Phosphagen kinase C-terminal domain; the sequence is FVISTRVRLI…LELIKIEKEM (167 aa). Residues 59 to 63 and His-68 contribute to the ATP site; that span reads STRVR. Residue Cys-141 coordinates L-arginine. Residues 150–154 and 175–180 contribute to the ATP site; these read RASVH and RGTRGE. Glu-180 contacts L-arginine.

It belongs to the ATP:guanido phosphotransferase family.

The catalysed reaction is L-arginine + ATP = N(omega)-phospho-L-arginine + ADP + H(+). The sequence is that of Arginine kinase from Chionoecetes opilio (Atlantic snow crab).